We begin with the raw amino-acid sequence, 229 residues long: Acidic leucine-rich nuclear phosphoprotein 32-related protein 1 (229 aa).

LRR repeat units lie at residues 19–40 (TVDTLFLDNAEDGQIGGLTDQL), 42–63 (NLEMLSMVKCGLTTLAGFPTLP), 64–85 (ALTYLDISDNQLGDNASFDVLV), and 90–110 (DLKKITLASNKLSLDNLRCLK). Positions 124 to 164 (PSLGLLEDYREKMFEMIPSLKILDGCDVDGEEVEEEFAGEG) constitute an LRRCT domain. A compositionally biased stretch (acidic residues) spans 155-177 (EVEEEFAGEGGEDSEEGSGDEDG). Positions 155-229 (EVEEEFAGEG…DNKKAAGDDE (75 aa)) are disordered. Positions 219–229 (PDNKKAAGDDE) are enriched in basic and acidic residues.

This sequence belongs to the ANP32 family.

This is Acidic leucine-rich nuclear phosphoprotein 32-related protein 1 from Caenorhabditis elegans.